Here is a 292-residue protein sequence, read N- to C-terminus: Phosphatidylglycerol--prolipoprotein diacylglyceryl transferase (292 aa).

3 helical membrane-spanning segments follow: residues 18-38, 67-87, and 105-125; these read LFGVTFALRWYALAYIAGLLI, LLTWVILGVILGGRLGFVLFY, and GGMSFHGGFLGVMTALVAFCL. A 1,2-diacyl-sn-glycero-3-phospho-(1'-sn-glycerol) is bound at residue Arg150. The next 3 membrane-spanning stretches (helical) occupy residues 193–213, 222–242, and 266–286; these read QIYEAGLEGILLFTVLSLLVW, GSVSGMFLAGYGATRFLVEFV, and GLTMGQILSLPMILLGLYLIL.

This sequence belongs to the Lgt family.

The protein localises to the cell inner membrane. It carries out the reaction L-cysteinyl-[prolipoprotein] + a 1,2-diacyl-sn-glycero-3-phospho-(1'-sn-glycerol) = an S-1,2-diacyl-sn-glyceryl-L-cysteinyl-[prolipoprotein] + sn-glycerol 1-phosphate + H(+). Its pathway is protein modification; lipoprotein biosynthesis (diacylglyceryl transfer). Functionally, catalyzes the transfer of the diacylglyceryl group from phosphatidylglycerol to the sulfhydryl group of the N-terminal cysteine of a prolipoprotein, the first step in the formation of mature lipoproteins. The protein is Phosphatidylglycerol--prolipoprotein diacylglyceryl transferase of Cereibacter sphaeroides (strain ATCC 17023 / DSM 158 / JCM 6121 / CCUG 31486 / LMG 2827 / NBRC 12203 / NCIMB 8253 / ATH 2.4.1.) (Rhodobacter sphaeroides).